Here is a 101-residue protein sequence, read N- to C-terminus: Small ribosomal subunit protein uS14 (101 aa).

Belongs to the universal ribosomal protein uS14 family. Part of the 30S ribosomal subunit. Contacts proteins S3 and S10.

Its function is as follows. Binds 16S rRNA, required for the assembly of 30S particles and may also be responsible for determining the conformation of the 16S rRNA at the A site. The polypeptide is Small ribosomal subunit protein uS14 (Sodalis glossinidius (strain morsitans)).